We begin with the raw amino-acid sequence, 94 residues long: Integration host factor subunit beta (94 aa).

It belongs to the bacterial histone-like protein family. In terms of assembly, heterodimer of an alpha and a beta chain.

This protein is one of the two subunits of integration host factor, a specific DNA-binding protein that functions in genetic recombination as well as in transcriptional and translational control. This is Integration host factor subunit beta from Mannheimia succiniciproducens (strain KCTC 0769BP / MBEL55E).